The following is a 1420-amino-acid chain: DNA-directed RNA polymerase subunit beta' (1420 aa).

Zn(2+) is bound by residues Cys71, Cys73, Cys86, and Cys89. Asp461, Asp463, and Asp465 together coordinate Mg(2+). The Zn(2+) site is built by Cys815, Cys889, Cys896, and Cys899.

This sequence belongs to the RNA polymerase beta' chain family. In terms of assembly, the RNAP catalytic core consists of 2 alpha, 1 beta, 1 beta' and 1 omega subunit. When a sigma factor is associated with the core the holoenzyme is formed, which can initiate transcription. It depends on Mg(2+) as a cofactor. The cofactor is Zn(2+).

The catalysed reaction is RNA(n) + a ribonucleoside 5'-triphosphate = RNA(n+1) + diphosphate. DNA-dependent RNA polymerase catalyzes the transcription of DNA into RNA using the four ribonucleoside triphosphates as substrates. This Histophilus somni (strain 2336) (Haemophilus somnus) protein is DNA-directed RNA polymerase subunit beta'.